Here is a 273-residue protein sequence, read N- to C-terminus: Undecaprenyl-diphosphatase (273 aa).

Helical transmembrane passes span 3–23, 48–68, 92–112, 116–136, 152–172, 193–213, 220–240, and 252–272; these read IVEIIKAIILGMVEGLTEFAP, AANTFKVVIQLGSILAVVVVF, MQVIVGLIPAGVLGVLFEDYI, LFSTATVLIGLVLGALLMIAA, ITYKQALIVGLVQCLSLWPGF, ADFTFIMAVPIMMGASVLSLL, TIDALPFFTAGFISAFLFALI, and IRLVPFAVYRIVLALVIYIVY.

This sequence belongs to the UppP family.

Its subcellular location is the cell membrane. The catalysed reaction is di-trans,octa-cis-undecaprenyl diphosphate + H2O = di-trans,octa-cis-undecaprenyl phosphate + phosphate + H(+). In terms of biological role, catalyzes the dephosphorylation of undecaprenyl diphosphate (UPP). Confers resistance to bacitracin. This chain is Undecaprenyl-diphosphatase, found in Geobacillus sp. (strain WCH70).